A 191-amino-acid chain; its full sequence is Protein Ves (191 aa).

Belongs to the Ves family.

The chain is Protein Ves from Escherichia coli (strain K12 / MC4100 / BW2952).